The primary structure comprises 414 residues: Methanesulfonate monooxygenase hydroxylase subunit alpha (414 aa).

The 120-residue stretch at 44-163 (WVPFRHESEL…CEVKFGGFVW (120 aa)) folds into the Rieske domain. [2Fe-2S] cluster is bound by residues Cys86, His88, Cys115, and His118. Residue His225 coordinates Fe cation.

Belongs to the bacterial ring-hydroxylating dioxygenase alpha subunit family. The MSA monooxygenase system consists of 4 proteins: the 2 subunits of the hydroxylase component (MsmA and MsmB), a ferredoxin (MsmC) and a ferredoxin reductase (MsmD). The hydroxylase component consists of a 3 alpha (MsmA) and 3 beta (MsmB) subunits. The cofactor is [2Fe-2S] cluster. It depends on Fe cation as a cofactor.

It is found in the cytoplasm. The enzyme catalyses methanesulfonate + NADH + O2 = sulfite + formaldehyde + NAD(+) + H2O. With respect to regulation, MSAMO is inhibited by metal chelators (such as bathophenanthroline, bathocuprione, neocuprione, alpha-alpha-dipyridil and sodium EDTA) and by sodium azide, sodium arsenate and potassium cyanide. Methanesulfonate monooxygenase (MSAMO) mediates the primary degradation of methanesulfonic acid (MSA) to produce formaldehyd and inorganic sulfite by initial hydroxylation of the carbon atom prior to spontaneous cleavage of the unstable hydroxymethanesulfonic acid. MSAMO has a restricted substrate range that includes only the short-chain aliphatic sulfonates (methane- to butanesulfonate) and excludes all larger molecules, such as arylsulfonates and aromatic sulfonates. All MSAMO components are required for enzyme activity. The chain is Methanesulfonate monooxygenase hydroxylase subunit alpha from Methylosulfonomonas methylovora.